The following is a 324-amino-acid chain: ATP-dependent 6-phosphofructokinase (324 aa).

Glycine 15 contacts ATP. An ADP-binding site is contributed by 25–29; the sequence is RGVVR. Residues 76–77 and 106–109 each bind ATP; these read RF and GDGS. Residue aspartate 107 coordinates Mg(2+). 130-132 provides a ligand contact to substrate; the sequence is TID. Catalysis depends on aspartate 132, which acts as the Proton acceptor. Arginine 159 contacts ADP. Residues arginine 167 and 174 to 176 each bind substrate; that span reads MGR. Residues 190 to 192, lysine 216, and 218 to 220 each bind ADP; these read GCE and KRH. Residues glutamate 227, arginine 248, and 254–257 each bind substrate; that span reads HIQR.

This sequence belongs to the phosphofructokinase type A (PFKA) family. ATP-dependent PFK group I subfamily. Prokaryotic clade 'B1' sub-subfamily. In terms of assembly, homotetramer. Requires Mg(2+) as cofactor.

It is found in the cytoplasm. It catalyses the reaction beta-D-fructose 6-phosphate + ATP = beta-D-fructose 1,6-bisphosphate + ADP + H(+). Its pathway is carbohydrate degradation; glycolysis; D-glyceraldehyde 3-phosphate and glycerone phosphate from D-glucose: step 3/4. With respect to regulation, allosterically activated by ADP and other diphosphonucleosides, and allosterically inhibited by phosphoenolpyruvate. Catalyzes the phosphorylation of D-fructose 6-phosphate to fructose 1,6-bisphosphate by ATP, the first committing step of glycolysis. The protein is ATP-dependent 6-phosphofructokinase of Actinobacillus pleuropneumoniae serotype 5b (strain L20).